The following is a 150-amino-acid chain: Large ribosomal subunit protein bL9 (150 aa).

This sequence belongs to the bacterial ribosomal protein bL9 family.

Binds to the 23S rRNA. The polypeptide is Large ribosomal subunit protein bL9 (Neisseria gonorrhoeae (strain ATCC 700825 / FA 1090)).